Reading from the N-terminus, the 395-residue chain is Glutamyl-tRNA reductase (395 aa).

Substrate is bound by residues 45–48 (TCNR), serine 87, 92–94 (EDQ), and glutamine 98. Catalysis depends on cysteine 46, which acts as the Nucleophile. 167–172 (GAGEMG) contacts NADP(+).

This sequence belongs to the glutamyl-tRNA reductase family. As to quaternary structure, homodimer.

The enzyme catalyses (S)-4-amino-5-oxopentanoate + tRNA(Glu) + NADP(+) = L-glutamyl-tRNA(Glu) + NADPH + H(+). Its pathway is porphyrin-containing compound metabolism; protoporphyrin-IX biosynthesis; 5-aminolevulinate from L-glutamyl-tRNA(Glu): step 1/2. Catalyzes the NADPH-dependent reduction of glutamyl-tRNA(Glu) to glutamate 1-semialdehyde (GSA). This Methanosphaera stadtmanae (strain ATCC 43021 / DSM 3091 / JCM 11832 / MCB-3) protein is Glutamyl-tRNA reductase.